The sequence spans 307 residues: UDP-3-O-acyl-N-acetylglucosamine deacetylase (307 aa).

Residues His-80, His-239, and Asp-243 each coordinate Zn(2+). His-266 acts as the Proton donor in catalysis.

Belongs to the LpxC family. Zn(2+) serves as cofactor.

It carries out the reaction a UDP-3-O-[(3R)-3-hydroxyacyl]-N-acetyl-alpha-D-glucosamine + H2O = a UDP-3-O-[(3R)-3-hydroxyacyl]-alpha-D-glucosamine + acetate. It participates in glycolipid biosynthesis; lipid IV(A) biosynthesis; lipid IV(A) from (3R)-3-hydroxytetradecanoyl-[acyl-carrier-protein] and UDP-N-acetyl-alpha-D-glucosamine: step 2/6. Its function is as follows. Catalyzes the hydrolysis of UDP-3-O-myristoyl-N-acetylglucosamine to form UDP-3-O-myristoylglucosamine and acetate, the committed step in lipid A biosynthesis. The polypeptide is UDP-3-O-acyl-N-acetylglucosamine deacetylase (Neisseria meningitidis serogroup C (strain 053442)).